The sequence spans 79 residues: NADH-ubiquinone oxidoreductase chain 4 (79 aa).

Helical transmembrane passes span 24–44 (SYTLMIAHGLCSSGLFCLANI) and 54–74 (LLINKGLLNFMPSLSLWWFLL).

It belongs to the complex I subunit 4 family.

It localises to the mitochondrion membrane. It catalyses the reaction a ubiquinone + NADH + 5 H(+)(in) = a ubiquinol + NAD(+) + 4 H(+)(out). Its function is as follows. Core subunit of the mitochondrial membrane respiratory chain NADH dehydrogenase (Complex I) that is believed to belong to the minimal assembly required for catalysis. Complex I functions in the transfer of electrons from NADH to the respiratory chain. The immediate electron acceptor for the enzyme is believed to be ubiquinone. This is NADH-ubiquinone oxidoreductase chain 4 (ND4) from Simulium vittatum (Striped black fly).